Here is a 39-residue protein sequence, read N- to C-terminus: MGTIVCQDCNEAIHYFEDEKVTTLYGTCCGQCQCPVDEE.

This is an uncharacterized protein from Bacillus subtilis (strain 168).